We begin with the raw amino-acid sequence, 501 residues long: MDALLQLKGIDKAFPGVKALSGAALNVYPGRVMALVGENGAGKSTMMKVLTGIYTRDAGSLLWLGKETTFNGPKSSQEAGIGIIHQELNLIPQLTIAENIFLGREFVNRFGKIDWKKMYAEADHLLAKLNLRFKSDKLVGELSIGDQQMVEIAKVLSFESKVIIMDEPTDALTDTETDSLFRVIRELKSQGRGIVYISHRMKEIFEICDDVTVFRDGQFIAEREVATLTEDSLIEMMVGRKLEDQYPHLDNAPGEIRLKVDNLCGPGVNDVSFVLRKGEILGISGLMGTGRTELMKVLYGAMPRTSGYVTLEGHEVVTRSPQDGLANGIVYISEDRKRDGLVLGMSVKENMSLTALDYFSRAGGSLKHKDEQQAVGDFIRLFNVKTPSMEQAIGLLSGGNQQKVAIARGLMTRPKVLILDEPTRGVDVGAKKEIYQLINQFKADGLSIILVSSEMPEVLGMSDRIIVMHEGHLSGEFTREQATQEVLMAAAVGKLNRVNQE.

ABC transporter domains lie at 5–241 and 252–495; these read LQLK…VGRK and APGE…VGKL. 37-44 contacts ATP; sequence GENGAGKS.

This sequence belongs to the ABC transporter superfamily. Ribose importer (TC 3.A.1.2.1) family. The complex is composed of an ATP-binding protein (RbsA), two transmembrane proteins (RbsC) and a solute-binding protein (RbsB).

Its subcellular location is the cell inner membrane. It carries out the reaction D-ribose(out) + ATP + H2O = D-ribose(in) + ADP + phosphate + H(+). Part of the ABC transporter complex RbsABC involved in ribose import. Responsible for energy coupling to the transport system. This chain is Ribose import ATP-binding protein RbsA, found in Salmonella typhi.